A 101-amino-acid chain; its full sequence is Small ribosomal subunit protein uS14 (101 aa).

This sequence belongs to the universal ribosomal protein uS14 family. Part of the 30S ribosomal subunit. Contacts proteins S3 and S10.

Its function is as follows. Binds 16S rRNA, required for the assembly of 30S particles and may also be responsible for determining the conformation of the 16S rRNA at the A site. This Methylorubrum populi (strain ATCC BAA-705 / NCIMB 13946 / BJ001) (Methylobacterium populi) protein is Small ribosomal subunit protein uS14.